The primary structure comprises 456 residues: Armadillo repeat-containing X-linked protein 1 (456 aa).

At 1–6 (MGRTRE) the chain is on the mitochondrial intermembrane side. 2 mitochondrion outer membrane (MOM)-targeting sequence regions span residues 1 to 6 (MGRTRE) and 26 to 36 (RLTWGKDENEK). Residues 7–29 (AGCVAAGMVIGAGACYCVYRLTW) form a helical; Signal-anchor membrane-spanning segment. At 30-456 (GKDENEKLWD…VKVLKVLTKL (427 aa)) the chain is on the cytoplasmic side. 2 disordered regions span residues 37-106 (LWDE…SGGG) and 139-186 (RTLT…APAT). Residues 38–50 (WDEEEEEEEEEEE) show a composition bias toward acidic residues. Basic and acidic residues-rich tracts occupy residues 51 to 62 (KSCSDKTEKELK) and 72 to 81 (KPQDDSKSKV). Residues 162 to 180 (SRARNRTSGKVKRKNRSKS) show a composition bias toward basic residues. ARM repeat units follow at residues 198 to 238 (PYKI…NNAA), 240 to 279 (SFNQ…NLSV), 361 to 401 (PAMT…NIND), and 418 to 456 (SSLF…LTKL).

This sequence belongs to the eutherian X-chromosome-specific Armcx family. Interacts with MIRO1. In terms of tissue distribution, widely expressed in the adult nervous tissue, especially in the forebrain, including the cerebral cortex, hippocampus and thalamus.

The protein localises to the mitochondrion. The protein resides in the mitochondrion outer membrane. Its function is as follows. Regulates mitochondrial transport during axon regeneration. Increases the proportion of motile mitochondria by recruiting stationary mitochondria into the motile pool. Enhances mitochondria movement and neurite growth in both adult axons and embryonic neurons. Promotes neuronal survival and axon regeneration after nerve injury. May link mitochondria to the Trak1-kinesin motor complex via its interaction with Miro1. This chain is Armadillo repeat-containing X-linked protein 1 (Armcx1), found in Mus musculus (Mouse).